Reading from the N-terminus, the 175-residue chain is Co-chaperone protein HscB homolog (175 aa).

The J domain maps to 7–79 (SHFDLFDLPA…LKRATYLLHL (73 aa)).

The protein belongs to the HscB family. In terms of assembly, interacts with HscA and stimulates its ATPase activity.

In terms of biological role, co-chaperone involved in the maturation of iron-sulfur cluster-containing proteins. Seems to help targeting proteins to be folded toward HscA. The polypeptide is Co-chaperone protein HscB homolog (Paraburkholderia xenovorans (strain LB400)).